The sequence spans 363 residues: tRNA/tmRNA (uracil-C(5))-methyltransferase (363 aa).

Positions 187, 215, 220, 236, and 296 each coordinate S-adenosyl-L-methionine. The active-site Nucleophile is the cysteine 321. Glutamate 355 acts as the Proton acceptor in catalysis.

The protein belongs to the class I-like SAM-binding methyltransferase superfamily. RNA M5U methyltransferase family. TrmA subfamily.

It catalyses the reaction uridine(54) in tRNA + S-adenosyl-L-methionine = 5-methyluridine(54) in tRNA + S-adenosyl-L-homocysteine + H(+). The catalysed reaction is uridine(341) in tmRNA + S-adenosyl-L-methionine = 5-methyluridine(341) in tmRNA + S-adenosyl-L-homocysteine + H(+). Its function is as follows. Dual-specificity methyltransferase that catalyzes the formation of 5-methyluridine at position 54 (m5U54) in all tRNAs, and that of position 341 (m5U341) in tmRNA (transfer-mRNA). The sequence is that of tRNA/tmRNA (uracil-C(5))-methyltransferase from Haemophilus influenzae (strain PittEE).